We begin with the raw amino-acid sequence, 256 residues long: Thiazole synthase (256 aa).

Lysine 96 acts as the Schiff-base intermediate with DXP in catalysis. 1-deoxy-D-xylulose 5-phosphate contacts are provided by residues glycine 157, 183 to 184 (AG), and 205 to 206 (NT).

This sequence belongs to the ThiG family. In terms of assembly, homotetramer. Forms heterodimers with either ThiH or ThiS.

It localises to the cytoplasm. It carries out the reaction [ThiS sulfur-carrier protein]-C-terminal-Gly-aminoethanethioate + 2-iminoacetate + 1-deoxy-D-xylulose 5-phosphate = [ThiS sulfur-carrier protein]-C-terminal Gly-Gly + 2-[(2R,5Z)-2-carboxy-4-methylthiazol-5(2H)-ylidene]ethyl phosphate + 2 H2O + H(+). It participates in cofactor biosynthesis; thiamine diphosphate biosynthesis. In terms of biological role, catalyzes the rearrangement of 1-deoxy-D-xylulose 5-phosphate (DXP) to produce the thiazole phosphate moiety of thiamine. Sulfur is provided by the thiocarboxylate moiety of the carrier protein ThiS. In vitro, sulfur can be provided by H(2)S. This Bacillus mycoides (strain KBAB4) (Bacillus weihenstephanensis) protein is Thiazole synthase.